The sequence spans 397 residues: Nuclear egress protein 2 (397 aa).

The Perinuclear space segment spans residues Met1–Trp358. 2 disordered regions span residues Arg205–Pro245 and Ala291–Glu332. The residue at position 216 (Ser216) is a Phosphoserine. Composition is skewed to low complexity over residues Pro224–Gly239 and Ala291–Ala301. Residues Ser310–Pro322 are compositionally biased toward basic residues. The chain crosses the membrane as a helical span at residues Leu359–Trp381. The Nuclear segment spans residues Arg382–Asp397.

The protein belongs to the herpesviridae NEC2 protein family. As to quaternary structure, forms a heterohexameric complex with NEC1. Interacts with host UBA7 and RNF170; this interaction promotes UBA7 proteasomal degradation. In terms of processing, phosphorylated. Phosphorylation by viral kinase UL97 at Ser-216 plays an important role for correct viral nuclear egress complex (NEC) localization.

Its subcellular location is the host nucleus inner membrane. In terms of biological role, plays an essential role in virion nuclear egress, the first step of virion release from infected cell. Within the host nucleus, NEC1 interacts with the newly formed capsid through the vertexes and directs it to the inner nuclear membrane by associating with NEC2. Induces the budding of the capsid at the inner nuclear membrane as well as its envelopment into the perinuclear space. There, the NEC1/NEC2 complex promotes the fusion of the enveloped capsid with the outer nuclear membrane and the subsequent release of the viral capsid into the cytoplasm where it will reach the secondary budding sites in the host Golgi or trans-Golgi network. Inhibits host ISGylation and subsequent innate antiviral response by targeting host UBA7 for proteasomal degradation. The sequence is that of Nuclear egress protein 2 from Human cytomegalovirus (strain AD169) (HHV-5).